We begin with the raw amino-acid sequence, 36 residues long: Pancreatic polypeptide (36 aa).

Phenylalanine amide is present on phenylalanine 36.

This sequence belongs to the NPY family.

It localises to the secreted. Its function is as follows. Hormone secreted by pancreatic cells that acts as a regulator of pancreatic and gastrointestinal functions. This Alligator mississippiensis (American alligator) protein is Pancreatic polypeptide (ppy).